Consider the following 420-residue polypeptide: L-rhamnose isomerase (420 aa).

3 residues coordinate Mn(2+): His264, Asp296, and Asp298.

The protein belongs to the rhamnose isomerase family. Mn(2+) is required as a cofactor.

It localises to the cytoplasm. It catalyses the reaction L-rhamnopyranose = L-rhamnulose. Its pathway is carbohydrate degradation; L-rhamnose degradation; glycerone phosphate from L-rhamnose: step 1/3. Catalyzes the interconversion of L-rhamnose and L-rhamnulose. The sequence is that of L-rhamnose isomerase from Listeria monocytogenes serovar 1/2a (strain ATCC BAA-679 / EGD-e).